A 299-amino-acid polypeptide reads, in one-letter code: Pyridoxal 5'-phosphate synthase subunit PdxS (299 aa).

Position 24 (aspartate 24) interacts with D-ribose 5-phosphate. Residue lysine 81 is the Schiff-base intermediate with D-ribose 5-phosphate of the active site. A D-ribose 5-phosphate-binding site is contributed by glycine 153. Arginine 165 contributes to the D-glyceraldehyde 3-phosphate binding site. Residues glycine 219 and 240–241 each bind D-ribose 5-phosphate; that span reads GS.

The protein belongs to the PdxS/SNZ family. In terms of assembly, in the presence of PdxT, forms a dodecamer of heterodimers.

The enzyme catalyses aldehydo-D-ribose 5-phosphate + D-glyceraldehyde 3-phosphate + L-glutamine = pyridoxal 5'-phosphate + L-glutamate + phosphate + 3 H2O + H(+). It functions in the pathway cofactor biosynthesis; pyridoxal 5'-phosphate biosynthesis. Functionally, catalyzes the formation of pyridoxal 5'-phosphate from ribose 5-phosphate (RBP), glyceraldehyde 3-phosphate (G3P) and ammonia. The ammonia is provided by the PdxT subunit. Can also use ribulose 5-phosphate and dihydroxyacetone phosphate as substrates, resulting from enzyme-catalyzed isomerization of RBP and G3P, respectively. This chain is Pyridoxal 5'-phosphate synthase subunit PdxS, found in Methanococcus vannielii (strain ATCC 35089 / DSM 1224 / JCM 13029 / OCM 148 / SB).